A 449-amino-acid chain; its full sequence is PC-esterase domain-containing protein 1A (449 aa).

It belongs to the PC-esterase family.

This Mus musculus (Mouse) protein is PC-esterase domain-containing protein 1A (Pced1a).